A 2061-amino-acid chain; its full sequence is Putative PWWP domain-containing DNA repair factor 4 (2061 aa).

Disordered stretches follow at residues 101 to 211 (TNLG…SRAR), 382 to 408 (ALGR…RSSV), 541 to 586 (TPGT…GDGS), 668 to 694 (PATL…GDGS), 864 to 910 (PTPG…SERS), 1046 to 1072 (PGTM…GDRS), 1159 to 1182 (ALHG…RGDS), 1205 to 1383 (KAIA…RDDK), 1521 to 1548 (PGAL…DSSP), and 1602 to 1726 (KKGK…KLAN). Composition is skewed to basic and acidic residues over residues 133 to 153 (PRED…KREN) and 162 to 173 (ESKRALRDDRSQ). The segment covering 397-408 (TPGTLQGNRSSV) has biased composition (polar residues). A compositionally biased stretch (polar residues) spans 1051–1061 (GDSSTARTATA). Positions 1364–1373 (DSSQVHTTIA) are enriched in polar residues. A compositionally biased stretch (basic and acidic residues) spans 1639–1648 (LKEETQDSRP). Polar residues predominate over residues 1656 to 1665 (PESSPFSGNI). The region spanning 1756–1817 (RGTMVWFKFQ…KHLDCKEKEK (62 aa)) is the PWWP domain.

This sequence belongs to the PWWP3A family.

The sequence is that of Putative PWWP domain-containing DNA repair factor 4 from Homo sapiens (Human).